The chain runs to 360 residues: SPRY domain-containing SOCS box protein 3 (360 aa).

The interval 20–55 (RDQDARSPTLPAEEEAWGYDSDGQHSNSDSDTDLLH) is disordered. A B30.2/SPRY domain is found at 85 to 274 (LHTFHQIKSC…MKVIRSCCCR (190 aa)). The region spanning 264–315 (SMKVIRSCCCRTSLQYLCCARLRQLLPDSVDSLEVLPLPPGLKQVLGNKLGW) is the SOCS box domain. Residues 323-350 (RSNQHKGDTSATTSCGSDSDSSCTPGQD) form a disordered region. A compositionally biased stretch (low complexity) spans 331 to 346 (TSATTSCGSDSDSSCT).

It belongs to the SPSB family. As to quaternary structure, substrate-recognition component of the ECS(SPSB3) complex, composed of spsb3, cul5, elob, elob and rnf7/rbx2.

It localises to the nucleus. The protein operates within protein modification; protein ubiquitination. Functionally, substrate-recognition component of a cullin-5-RING E3 ubiquitin-protein ligase complex (ECS complex, also named CRL5 complex), which mediates the ubiquitination and subsequent proteasomal degradation of target proteins. This chain is SPRY domain-containing SOCS box protein 3 (spsb3), found in Xenopus tropicalis (Western clawed frog).